Here is a 65-residue protein sequence, read N- to C-terminus: Putative beta-neurotoxin RjAa8 (65 aa).

In terms of domain architecture, LCN-type CS-alpha/beta spans 1 to 64 (KEGYPMGRDG…VWDSSTNKCG (64 aa)). 4 disulfides stabilise this stretch: C11/C63, C15/C37, C22/C44, and C26/C46.

The protein belongs to the long (4 C-C) scorpion toxin superfamily. Sodium channel inhibitor family. Beta subfamily. In terms of tissue distribution, expressed by the venom gland.

It is found in the secreted. In terms of biological role, beta toxins bind voltage-independently at site-4 of sodium channels (Nav) and shift the voltage of activation toward more negative potentials thereby affecting sodium channel activation and promoting spontaneous and repetitive firing. This Rhopalurus junceus (Caribbean blue scorpion) protein is Putative beta-neurotoxin RjAa8.